Consider the following 455-residue polypeptide: Bifunctional protein GlmU (455 aa).

The pyrophosphorylase stretch occupies residues methionine 1–arginine 226. UDP-N-acetyl-alpha-D-glucosamine contacts are provided by residues leucine 8–glycine 11, lysine 22, glutamine 73, glycine 78–threonine 79, tyrosine 99–aspartate 101, glycine 136, glutamate 151, asparagine 166, and asparagine 224. Mg(2+) is bound at residue aspartate 101. Asparagine 224 is a Mg(2+) binding site. Positions threonine 227–lysine 247 are linker. Residues glycine 248–lysine 455 are N-acetyltransferase. Positions 330 and 348 each coordinate UDP-N-acetyl-alpha-D-glucosamine. Catalysis depends on histidine 360, which acts as the Proton acceptor. Positions 363 and 374 each coordinate UDP-N-acetyl-alpha-D-glucosamine. Acetyl-CoA is bound by residues alanine 377, asparagine 383–tyrosine 384, serine 402, alanine 420, and arginine 437.

This sequence in the N-terminal section; belongs to the N-acetylglucosamine-1-phosphate uridyltransferase family. It in the C-terminal section; belongs to the transferase hexapeptide repeat family. As to quaternary structure, homotrimer. The cofactor is Mg(2+).

The protein resides in the cytoplasm. It carries out the reaction alpha-D-glucosamine 1-phosphate + acetyl-CoA = N-acetyl-alpha-D-glucosamine 1-phosphate + CoA + H(+). It catalyses the reaction N-acetyl-alpha-D-glucosamine 1-phosphate + UTP + H(+) = UDP-N-acetyl-alpha-D-glucosamine + diphosphate. Its pathway is nucleotide-sugar biosynthesis; UDP-N-acetyl-alpha-D-glucosamine biosynthesis; N-acetyl-alpha-D-glucosamine 1-phosphate from alpha-D-glucosamine 6-phosphate (route II): step 2/2. It participates in nucleotide-sugar biosynthesis; UDP-N-acetyl-alpha-D-glucosamine biosynthesis; UDP-N-acetyl-alpha-D-glucosamine from N-acetyl-alpha-D-glucosamine 1-phosphate: step 1/1. It functions in the pathway bacterial outer membrane biogenesis; LPS lipid A biosynthesis. Its function is as follows. Catalyzes the last two sequential reactions in the de novo biosynthetic pathway for UDP-N-acetylglucosamine (UDP-GlcNAc). The C-terminal domain catalyzes the transfer of acetyl group from acetyl coenzyme A to glucosamine-1-phosphate (GlcN-1-P) to produce N-acetylglucosamine-1-phosphate (GlcNAc-1-P), which is converted into UDP-GlcNAc by the transfer of uridine 5-monophosphate (from uridine 5-triphosphate), a reaction catalyzed by the N-terminal domain. The polypeptide is Bifunctional protein GlmU (Francisella tularensis subsp. tularensis (strain SCHU S4 / Schu 4)).